The chain runs to 287 residues: U-megalopygitoxin(8)-Mo12 (287 aa).

Residues Met1 to Gly17 form the signal peptide. His284 carries the post-translational modification Histidine amide.

The protein belongs to the megalysin family. Post-translationally, contains 2 disulfide bonds. In terms of tissue distribution, expressed by the venom apparatus.

It localises to the secreted. Its subcellular location is the target cell membrane. May function as a large pore-forming protein. In Megalopyge opercularis (Southern flannel moth), this protein is U-megalopygitoxin(8)-Mo12.